The sequence spans 167 residues: uncharacterized protein (167 aa).

It to B.subtilis XkdI.

This is an uncharacterized protein from Bacillus subtilis (strain 168).